The sequence spans 413 residues: CCA-adding enzyme (413 aa).

Serine 42 and lysine 45 together coordinate ATP. Residues serine 42 and lysine 45 each coordinate CTP. Mg(2+) contacts are provided by aspartate 54, aspartate 56, and aspartate 107. Positions 130, 150, and 159 each coordinate ATP. The CTP site is built by histidine 130, lysine 150, and tyrosine 159.

Belongs to the tRNA nucleotidyltransferase/poly(A) polymerase family. Archaeal CCA-adding enzyme subfamily. As to quaternary structure, homodimer. The cofactor is Mg(2+).

It carries out the reaction a tRNA precursor + 2 CTP + ATP = a tRNA with a 3' CCA end + 3 diphosphate. It catalyses the reaction a tRNA with a 3' CCA end + 2 CTP + ATP = a tRNA with a 3' CCACCA end + 3 diphosphate. Functionally, catalyzes the addition and repair of the essential 3'-terminal CCA sequence in tRNAs without using a nucleic acid template. Adds these three nucleotides in the order of C, C, and A to the tRNA nucleotide-73, using CTP and ATP as substrates and producing inorganic pyrophosphate. tRNA 3'-terminal CCA addition is required both for tRNA processing and repair. Also involved in tRNA surveillance by mediating tandem CCA addition to generate a CCACCA at the 3' terminus of unstable tRNAs. While stable tRNAs receive only 3'-terminal CCA, unstable tRNAs are marked with CCACCA and rapidly degraded. In Sulfurisphaera tokodaii (strain DSM 16993 / JCM 10545 / NBRC 100140 / 7) (Sulfolobus tokodaii), this protein is CCA-adding enzyme.